Reading from the N-terminus, the 838-residue chain is Protein P (838 aa).

The tract at residues 1–179 (MPLSYQHFRK…FCGSPYSWEQ (179 aa)) is terminal protein domain (TP). Residues 180–341 (ELQHSQRHGD…YCLSHLVNLL (162 aa)) form a spacer region. The tract at residues 218 to 242 (LGLQPHQGPLATSQPGRSGSIRPRA) is disordered. The interval 342–685 (EDWGPCVEHG…YLNLYPVARQ (344 aa)) is polymerase/reverse transcriptase domain (RT). The Reverse transcriptase domain occupies 352–595 (EHHIRIPRTP…YSLNFMGYVI (244 aa)). Mg(2+) contacts are provided by Asp-424, Asp-546, and Asp-547.

This sequence belongs to the hepadnaviridae P protein family.

It catalyses the reaction DNA(n) + a 2'-deoxyribonucleoside 5'-triphosphate = DNA(n+1) + diphosphate. The catalysed reaction is Endonucleolytic cleavage to 5'-phosphomonoester.. Its activity is regulated as follows. Activated by host HSP70 and HSP40 in vitro to be able to bind the epsilon loop of the pgRNA. Because deletion of the RNase H region renders the protein partly chaperone-independent, the chaperones may be needed indirectly to relieve occlusion of the RNA-binding site by this domain. Inhibited by several reverse-transcriptase inhibitors: Lamivudine, Adefovir and Entecavir. Functionally, multifunctional enzyme that converts the viral RNA genome into dsDNA in viral cytoplasmic capsids. This enzyme displays a DNA polymerase activity that can copy either DNA or RNA templates, and a ribonuclease H (RNase H) activity that cleaves the RNA strand of RNA-DNA heteroduplexes in a partially processive 3'- to 5'-endonucleasic mode. Neo-synthesized pregenomic RNA (pgRNA) are encapsidated together with the P protein, and reverse-transcribed inside the nucleocapsid. Initiation of reverse-transcription occurs first by binding the epsilon loop on the pgRNA genome, and is initiated by protein priming, thereby the 5'-end of (-)DNA is covalently linked to P protein. Partial (+)DNA is synthesized from the (-)DNA template and generates the relaxed circular DNA (RC-DNA) genome. After budding and infection, the RC-DNA migrates in the nucleus, and is converted into a plasmid-like covalently closed circular DNA (cccDNA). The activity of P protein does not seem to be necessary for cccDNA generation, and is presumably released from (+)DNA by host nuclear DNA repair machinery. The polypeptide is Protein P (Homo sapiens (Human)).